Here is a 633-residue protein sequence, read N- to C-terminus: Breast carcinoma-amplified sequence 1 homolog (633 aa).

Disordered stretches follow at residues 1 to 34 and 57 to 422; these read MGNQMSVPLRPGDQEHDPGADTCKVTSDNECVQN and SSKD…KLFW. Polar residues-rich tracts occupy residues 24–34 and 57–68; these read KVTSDNECVQN and SSKDNVATSSPK. Phosphoserine is present on serine 127. Residues 278–288 show a composition bias toward polar residues; it reads VDTTENSSSIM. Basic and acidic residues predominate over residues 300–318; sequence TETKKDPEDTKATKADSVC. Position 328 is a phosphoserine (serine 328). A Phosphothreonine modification is found at threonine 330. Residues 359–378 show a composition bias toward polar residues; that stretch reads NSPTTSANLKSDKANFTPQE. Serine 360 carries the post-translational modification Phosphoserine. Positions 400-410 are enriched in basic and acidic residues; the sequence is SEGRDSGKEKA. Phosphoserine is present on residues serine 425 and serine 443. The tract at residues 454–633 is disordered; the sequence is ESSLQTVDLS…VSIGPVGKSK (180 aa). Basic and acidic residues predominate over residues 471-481; sequence TDVKVKEESKP. Polar residues predominate over residues 510–522; it reads KDSSCQTSNSVEK. Phosphothreonine is present on threonine 523. Position 525 is a phosphoserine (serine 525). A compositionally biased stretch (basic and acidic residues) spans 537-555; sequence KNKETSSSKDKKSVDKKSA. Phosphoserine occurs at positions 601 and 615. The interval 614-633 is interacts with DYNLL1 AND DYNLL2; the sequence is MSDAQVQTDPVSIGPVGKSK.

Homodimer. Interacts with DYNLL1 and DYNLL2. Highly expressed in the brain and, more specifically, in oligodendrocytes. Expressed in the Schwann cells (at protein level).

The protein localises to the cytoplasm. In terms of biological role, required for myelination. This chain is Breast carcinoma-amplified sequence 1 homolog (Bcas1), found in Mus musculus (Mouse).